The following is a 430-amino-acid chain: Enolase (430 aa).

Gln-163 is a binding site for (2R)-2-phosphoglycerate. Glu-205 acts as the Proton donor in catalysis. Positions 242, 287, and 314 each coordinate Mg(2+). Residues Lys-339, Arg-368, Ser-369, and Lys-390 each coordinate (2R)-2-phosphoglycerate. The active-site Proton acceptor is Lys-339.

It belongs to the enolase family. Requires Mg(2+) as cofactor.

It localises to the cytoplasm. Its subcellular location is the secreted. The protein localises to the cell surface. The enzyme catalyses (2R)-2-phosphoglycerate = phosphoenolpyruvate + H2O. It participates in carbohydrate degradation; glycolysis; pyruvate from D-glyceraldehyde 3-phosphate: step 4/5. Functionally, catalyzes the reversible conversion of 2-phosphoglycerate (2-PG) into phosphoenolpyruvate (PEP). It is essential for the degradation of carbohydrates via glycolysis. The sequence is that of Enolase from Bacillus pumilus (strain SAFR-032).